Reading from the N-terminus, the 530-residue chain is Phosphoenolpyruvate carboxykinase (ATP) (530 aa).

Arg58, Tyr195, and Lys201 together coordinate substrate. Residues Lys201, His220, and 236 to 244 (GLSGTGKTT) each bind ATP. Residues Lys201 and His220 each contribute to the Mn(2+) site. Asp257 contacts Mn(2+). ATP is bound by residues Glu285, Arg321, 440–441 (RI), and Thr446. Arg321 contributes to the substrate binding site.

Belongs to the phosphoenolpyruvate carboxykinase (ATP) family. The cofactor is Mn(2+).

The protein localises to the cytoplasm. The enzyme catalyses oxaloacetate + ATP = phosphoenolpyruvate + ADP + CO2. It functions in the pathway carbohydrate biosynthesis; gluconeogenesis. Its function is as follows. Involved in the gluconeogenesis. Catalyzes the conversion of oxaloacetate (OAA) to phosphoenolpyruvate (PEP) through direct phosphoryl transfer between the nucleoside triphosphate and OAA. This is Phosphoenolpyruvate carboxykinase (ATP) from Staphylococcus aureus (strain MSSA476).